The sequence spans 765 residues: Phosphoribosylformylglycinamidine synthase subunit PurL (765 aa).

His-59 is a catalytic residue. The ATP site is built by Tyr-62 and Lys-104. Glu-106 serves as a coordination point for Mg(2+). Substrate contacts are provided by residues 107-110 and Arg-129; that span reads SHNH. His-108 serves as the catalytic Proton acceptor. Residue Asp-130 participates in Mg(2+) binding. Gln-254 provides a ligand contact to substrate. Asp-282 contacts Mg(2+). Substrate is bound at residue 326 to 328; the sequence is ESQ. ATP is bound by residues Asn-522 and Gly-559. Asn-560 contributes to the Mg(2+) binding site. Residue Ser-562 coordinates substrate.

It belongs to the FGAMS family. As to quaternary structure, monomer. Part of the FGAM synthase complex composed of 1 PurL, 1 PurQ and 2 PurS subunits.

It localises to the cytoplasm. The catalysed reaction is N(2)-formyl-N(1)-(5-phospho-beta-D-ribosyl)glycinamide + L-glutamine + ATP + H2O = 2-formamido-N(1)-(5-O-phospho-beta-D-ribosyl)acetamidine + L-glutamate + ADP + phosphate + H(+). It participates in purine metabolism; IMP biosynthesis via de novo pathway; 5-amino-1-(5-phospho-D-ribosyl)imidazole from N(2)-formyl-N(1)-(5-phospho-D-ribosyl)glycinamide: step 1/2. Part of the phosphoribosylformylglycinamidine synthase complex involved in the purines biosynthetic pathway. Catalyzes the ATP-dependent conversion of formylglycinamide ribonucleotide (FGAR) and glutamine to yield formylglycinamidine ribonucleotide (FGAM) and glutamate. The FGAM synthase complex is composed of three subunits. PurQ produces an ammonia molecule by converting glutamine to glutamate. PurL transfers the ammonia molecule to FGAR to form FGAM in an ATP-dependent manner. PurS interacts with PurQ and PurL and is thought to assist in the transfer of the ammonia molecule from PurQ to PurL. In Thermobifida fusca (strain YX), this protein is Phosphoribosylformylglycinamidine synthase subunit PurL.